We begin with the raw amino-acid sequence, 120 residues long: Glycine cleavage system H protein (120 aa).

The Lipoyl-binding domain occupies 17–99 (VATVGITAHA…QGAGWLYRLK (83 aa)). Position 58 is an N6-lipoyllysine (K58).

The protein belongs to the GcvH family. The glycine cleavage system is composed of four proteins: P, T, L and H. (R)-lipoate is required as a cofactor.

The glycine cleavage system catalyzes the degradation of glycine. The H protein shuttles the methylamine group of glycine from the P protein to the T protein. The sequence is that of Glycine cleavage system H protein from Methylorubrum populi (strain ATCC BAA-705 / NCIMB 13946 / BJ001) (Methylobacterium populi).